Consider the following 189-residue polypeptide: Large ribosomal subunit protein bL9 (189 aa).

The protein belongs to the bacterial ribosomal protein bL9 family.

Binds to the 23S rRNA. The chain is Large ribosomal subunit protein bL9 from Cereibacter sphaeroides (strain ATCC 17025 / ATH 2.4.3) (Rhodobacter sphaeroides).